The sequence spans 479 residues: Aspartyl/glutamyl-tRNA(Asn/Gln) amidotransferase subunit B (479 aa).

The protein belongs to the GatB/GatE family. GatB subfamily. As to quaternary structure, heterotrimer of A, B and C subunits.

It catalyses the reaction L-glutamyl-tRNA(Gln) + L-glutamine + ATP + H2O = L-glutaminyl-tRNA(Gln) + L-glutamate + ADP + phosphate + H(+). The catalysed reaction is L-aspartyl-tRNA(Asn) + L-glutamine + ATP + H2O = L-asparaginyl-tRNA(Asn) + L-glutamate + ADP + phosphate + 2 H(+). Its function is as follows. Allows the formation of correctly charged Asn-tRNA(Asn) or Gln-tRNA(Gln) through the transamidation of misacylated Asp-tRNA(Asn) or Glu-tRNA(Gln) in organisms which lack either or both of asparaginyl-tRNA or glutaminyl-tRNA synthetases. The reaction takes place in the presence of glutamine and ATP through an activated phospho-Asp-tRNA(Asn) or phospho-Glu-tRNA(Gln). This chain is Aspartyl/glutamyl-tRNA(Asn/Gln) amidotransferase subunit B, found in Clostridium beijerinckii (strain ATCC 51743 / NCIMB 8052) (Clostridium acetobutylicum).